A 60-amino-acid polypeptide reads, in one-letter code: Large ribosomal subunit protein bL32 (60 aa).

Positions 1–60 (MAVQQNKKTPSKRGMHRSHDFLVAPQLSVEPTTGETHMRHHISPNGFYRGRKVLKTKNDE) are disordered. A compositionally biased stretch (basic residues) spans 49 to 60 (RGRKVLKTKNDE).

The protein belongs to the bacterial ribosomal protein bL32 family.

The sequence is that of Large ribosomal subunit protein bL32 from Janthinobacterium sp. (strain Marseille) (Minibacterium massiliensis).